Consider the following 76-residue polypeptide: Acyl carrier protein (76 aa).

One can recognise a Carrier domain in the interval 1 to 74 (MEERIKEIIA…DVINYIKEKK (74 aa)). Ser34 bears the O-(pantetheine 4'-phosphoryl)serine mark.

Belongs to the acyl carrier protein (ACP) family. In terms of processing, 4'-phosphopantetheine is transferred from CoA to a specific serine of apo-ACP by AcpS. This modification is essential for activity because fatty acids are bound in thioester linkage to the sulfhydryl of the prosthetic group.

The protein localises to the cytoplasm. Its pathway is lipid metabolism; fatty acid biosynthesis. Its function is as follows. Carrier of the growing fatty acid chain in fatty acid biosynthesis. The protein is Acyl carrier protein of Persephonella marina (strain DSM 14350 / EX-H1).